We begin with the raw amino-acid sequence, 542 residues long: Prolyl 4-hydroxylase subunit alpha-3 (542 aa).

An N-terminal signal peptide occupies residues 1-24 (MGPGARLALLALLALGGDPAAATG). A coiled-coil region spans residues 105-129 (LEATENIRALKDGYEKVEQDLPAFE). A TPR repeat occupies 225–258 (EDALDYLAFACFQVGNVSCALSLSREFLVYSPDN). An N-linked (GlcNAc...) asparagine glycan is attached at asparagine 240. The Fe2OG dioxygenase domain occupies 420 to 527 (YAEYLQVVNY…KWVANKWIHE (108 aa)). Fe cation is bound by residues histidine 438 and aspartate 440. The N-linked (GlcNAc...) asparagine glycan is linked to asparagine 480. Residue histidine 508 participates in Fe cation binding. Lysine 518 is a 2-oxoglutarate binding site.

The protein belongs to the P4HA family. In terms of assembly, heterotetramer of two alpha-3 chains and two beta chains (the beta chain is the multi-functional PDI). Requires Fe(2+) as cofactor. L-ascorbate is required as a cofactor. N-glycosylation plays no role in the catalytic activity.

The protein resides in the endoplasmic reticulum lumen. It catalyses the reaction L-prolyl-[collagen] + 2-oxoglutarate + O2 = trans-4-hydroxy-L-prolyl-[collagen] + succinate + CO2. Functionally, catalyzes the post-translational formation of 4-hydroxyproline in -Xaa-Pro-Gly- sequences in collagens and other proteins. The protein is Prolyl 4-hydroxylase subunit alpha-3 (P4ha3) of Mus musculus (Mouse).